A 219-amino-acid polypeptide reads, in one-letter code: tRNA (guanine-N(7)-)-methyltransferase (219 aa).

4 residues coordinate S-adenosyl-L-methionine: E44, D69, E102, and N125. Substrate-binding residues include K129 and D161.

Belongs to the class I-like SAM-binding methyltransferase superfamily. TrmB family.

It carries out the reaction guanosine(46) in tRNA + S-adenosyl-L-methionine = N(7)-methylguanosine(46) in tRNA + S-adenosyl-L-homocysteine. It participates in tRNA modification; N(7)-methylguanine-tRNA biosynthesis. In terms of biological role, catalyzes the formation of N(7)-methylguanine at position 46 (m7G46) in tRNA. The polypeptide is tRNA (guanine-N(7)-)-methyltransferase (Clostridium perfringens (strain 13 / Type A)).